The primary structure comprises 1428 residues: MAFRKETKIKSNFSKISIGLASPEEILENSSGEVLKPETINYRTYKPERDGLFCERIFGPVKDYECHCGKYKRIRYKGIVCDRCGVEVTEKKVRRERMGHIQLVVPVAHIWYFRSLPNKIGYLLGLPTKKLDAIVYYERYVVIQPGVKAEDGINKYDLLSEEEYLDILDTLPKENQYLEDTDPNKFIAKMGAEAIYDLLSTLDLDALSYELRHKASNDSSQQRKNEALKRLQVVESFRASRGRNKPEWMIVRIVPVIPPELRPLVPLDGGRFATSDLNDLYRRVIIRNNRLKRLIEIKAPEVILRNEKRMLQEAVDSLFDNSRKSSAVKTDANRPLKSLSDSLKGKQGRFRQNLLGKRVDYSARSVIVVGPELKMGECGIPKLMAAELYKPFIIRKLIERGIVKTVKSAKKIVDRKEPVIWDILEHVMKGHPVLLNRAPTLHRLGIQAFQPHMIEGKAIQLHPLACTAFNADFDGDQMAVHLPLSNDAILEAQMLMLQAHNILNPANGAPITVPAQDMVLGLYYITKLRKGAKGEGLTFYGPEEALIAYNEGKVDIHAIVNVVVKDLDKDGKIVDVMMKETSVGRVIVNEIVPAEVGYLNTIISKKSLRDIISDVIKAVGVARACEFLDGIKNLGYYMAFKGGLSFNLGDIIIPKEKEELVKRGNEEVEQIMMNYNMGFITDNERYNQVIDTWTHVNSDLSDILYKTIKNDDQGFNSVFMMLDSGARGSKEQIRQLSGMRGLMAKPQKAGAEGAQIIENPILSNFKEGLSVLEYFISTHGARKGLADTALKTADAGYLTRRLVDVSHDVIINEEDCGTLRGLVCTALKNNDEVIATLYERILGRVSVHDIVHPTTGKLIVAGGEEITEDIAQEIEDSPIESVEIRSVLTCESKKGVCAKCYGRNLASSRMVQKGEAVGVIAAQSIGEPGTQLTLRTFHAGGIAGNMAANASIVAKNNARLEFEELRTVDTVDEMGEAVKVVVGRLAEVRFIDVNTGIILSTHNVPYGSKLYAADGDIVEKGKLIAKWDPFNAVIITEATGKIEFESVVENVTYKVESDEATGLREIIIIESKDKTKVPSAHIVTEDGNLIRTYNLPVGGHVVVENGQAVKAGDIIVKIPRAVGKAGDITGGLPRVTELFEARNPSNPAVVSEIDGEITMGKIKRGNREIIVTSKTGEVKKYLVNLSKQILVQENDYVRAGTPLSDGAITPADILAIKGPTAVQEYIVNEVQDVYRLQGVKINDKHFEIIVRQMMRKVEIDEPGDTRFLEQQVVDKQEFMEENDRIWGKKVVVDSGDSQNLQPGQIVTARKLRDENSMLKRRDLKPVEVRDAIPATSTQILQGITRAALGTSSFMSAASFQETTKVLNEAAINGKVDRLEGMKENVICGHLIPAGTGQREFEKIIVGSKEEYDRILANRKNVLDYSEVE.

Positions 66, 68, 81, and 84 each coordinate Zn(2+). Mg(2+) contacts are provided by Asp-472, Asp-474, and Asp-476. Cys-816, Cys-890, Cys-897, and Cys-900 together coordinate Zn(2+).

It belongs to the RNA polymerase beta' chain family. In terms of assembly, the RNAP catalytic core consists of 2 alpha, 1 beta, 1 beta' and 1 omega subunit. When a sigma factor is associated with the core the holoenzyme is formed, which can initiate transcription. It depends on Mg(2+) as a cofactor. The cofactor is Zn(2+).

The catalysed reaction is RNA(n) + a ribonucleoside 5'-triphosphate = RNA(n+1) + diphosphate. In terms of biological role, DNA-dependent RNA polymerase catalyzes the transcription of DNA into RNA using the four ribonucleoside triphosphates as substrates. The sequence is that of DNA-directed RNA polymerase subunit beta' from Phocaeicola vulgatus (strain ATCC 8482 / DSM 1447 / JCM 5826 / CCUG 4940 / NBRC 14291 / NCTC 11154) (Bacteroides vulgatus).